Consider the following 271-residue polypeptide: 3-deoxy-manno-octulosonate cytidylyltransferase (271 aa).

This sequence belongs to the KdsB family.

It localises to the cytoplasm. It catalyses the reaction 3-deoxy-alpha-D-manno-oct-2-ulosonate + CTP = CMP-3-deoxy-beta-D-manno-octulosonate + diphosphate. The protein operates within nucleotide-sugar biosynthesis; CMP-3-deoxy-D-manno-octulosonate biosynthesis; CMP-3-deoxy-D-manno-octulosonate from 3-deoxy-D-manno-octulosonate and CTP: step 1/1. It participates in bacterial outer membrane biogenesis; lipopolysaccharide biosynthesis. Functionally, activates KDO (a required 8-carbon sugar) for incorporation into bacterial lipopolysaccharide in Gram-negative bacteria. The polypeptide is 3-deoxy-manno-octulosonate cytidylyltransferase (Leptothrix cholodnii (strain ATCC 51168 / LMG 8142 / SP-6) (Leptothrix discophora (strain SP-6))).